A 351-amino-acid polypeptide reads, in one-letter code: Ribosomal RNA small subunit methyltransferase H (351 aa).

Residues 48 to 50 (GGY), Asp67, Phe94, Asp115, and Gln122 contribute to the S-adenosyl-L-methionine site. The interval 274–351 (AAQASRHVPG…PAPQGRGPRR (78 aa)) is disordered.

This sequence belongs to the methyltransferase superfamily. RsmH family.

It localises to the cytoplasm. It carries out the reaction cytidine(1402) in 16S rRNA + S-adenosyl-L-methionine = N(4)-methylcytidine(1402) in 16S rRNA + S-adenosyl-L-homocysteine + H(+). Its function is as follows. Specifically methylates the N4 position of cytidine in position 1402 (C1402) of 16S rRNA. This chain is Ribosomal RNA small subunit methyltransferase H, found in Methylorubrum extorquens (strain ATCC 14718 / DSM 1338 / JCM 2805 / NCIMB 9133 / AM1) (Methylobacterium extorquens).